Reading from the N-terminus, the 500-residue chain is Probable cardiolipin synthase YwiE (500 aa).

A run of 3 helical transmembrane segments spans residues Leu6 to Val26, Phe31 to Leu51, and Thr59 to Phe79. PLD phosphodiesterase domains are found at residues Leu237–Tyr264 and Gln413–Ser440. Active-site residues include His242, Lys244, Asp249, His418, Lys420, and Asp425.

This sequence belongs to the phospholipase D family. Cardiolipin synthase subfamily.

It is found in the cell membrane. It catalyses the reaction 2 a 1,2-diacyl-sn-glycero-3-phospho-(1'-sn-glycerol) = a cardiolipin + glycerol. Catalyzes the reversible phosphatidyl group transfer from one phosphatidylglycerol molecule to another to form cardiolipin (CL) (diphosphatidylglycerol) and glycerol. May have a role in the heat shock response since the level of the transcript of ywiE increases after a heat shock. The sequence is that of Probable cardiolipin synthase YwiE (ywiE) from Bacillus subtilis (strain 168).